The chain runs to 520 residues: Gamma aminobutyrate transaminase 3, chloroplastic (520 aa).

Residues 1–44 (MAKITSLIGSGIVAATNQVGPHVKHIPAVGNLQKQIVSDQIQVR) constitute a chloroplast transit peptide. Position 172-173 (172-173 (GS)) interacts with pyridoxal 5'-phosphate. Position 205 (tyrosine 205) interacts with substrate. Aspartate 312 contacts pyridoxal 5'-phosphate. Lysine 341 contributes to the substrate binding site. At lysine 341 the chain carries N6-(pyridoxal phosphate)lysine.

The protein belongs to the class-III pyridoxal-phosphate-dependent aminotransferase family. In terms of tissue distribution, expressed in leaves, roots, stems, flowers and fruits.

The protein localises to the plastid. Its subcellular location is the chloroplast. It catalyses the reaction 4-aminobutanoate + pyruvate = succinate semialdehyde + L-alanine. The catalysed reaction is 4-aminobutanoate + glyoxylate = succinate semialdehyde + glycine. Functionally, transaminase that degrades gamma-amino butyric acid (GABA) and uses pyruvate or glyoxylate as amino-group acceptor. Cannot use beta-alanine, ornithine, acetylornithine, serine, glycine, asparagine, glutamine, glutamate, valine, leucine, isoleucine, methionine, phenylalanine, histidine, lysine, arginine, aspartate, threonine, tyrosine, tryptophan, proline, or cysteine as amino donors. The protein is Gamma aminobutyrate transaminase 3, chloroplastic (GABA-TP3) of Solanum lycopersicum (Tomato).